The following is a 251-amino-acid chain: Triosephosphate isomerase (251 aa).

9 to 11 (NWK) provides a ligand contact to substrate. His-95 acts as the Electrophile in catalysis. The active-site Proton acceptor is Glu-167. Residues Gly-173, Ser-213, and 234–235 (GG) each bind substrate.

This sequence belongs to the triosephosphate isomerase family. Homodimer.

The protein localises to the cytoplasm. It carries out the reaction D-glyceraldehyde 3-phosphate = dihydroxyacetone phosphate. It participates in carbohydrate biosynthesis; gluconeogenesis. The protein operates within carbohydrate degradation; glycolysis; D-glyceraldehyde 3-phosphate from glycerone phosphate: step 1/1. In terms of biological role, involved in the gluconeogenesis. Catalyzes stereospecifically the conversion of dihydroxyacetone phosphate (DHAP) to D-glyceraldehyde-3-phosphate (G3P). The sequence is that of Triosephosphate isomerase from Ligilactobacillus salivarius (strain UCC118) (Lactobacillus salivarius).